A 374-amino-acid polypeptide reads, in one-letter code: Glutamate 5-kinase (374 aa).

K9 contacts ATP. Substrate-binding residues include S49, D136, and N148. ATP is bound by residues 168–169 and 210–216; these read TD and TGGMRSK. Residues 276-354 enclose the PUA domain; that stretch reads AGMITVDSGA…EEARQYSYLH (79 aa).

The protein belongs to the glutamate 5-kinase family.

The protein resides in the cytoplasm. The catalysed reaction is L-glutamate + ATP = L-glutamyl 5-phosphate + ADP. The protein operates within amino-acid biosynthesis; L-proline biosynthesis; L-glutamate 5-semialdehyde from L-glutamate: step 1/2. In terms of biological role, catalyzes the transfer of a phosphate group to glutamate to form L-glutamate 5-phosphate. The sequence is that of Glutamate 5-kinase from Geobacillus kaustophilus (strain HTA426).